A 211-amino-acid polypeptide reads, in one-letter code: tRNA (guanine-N(7)-)-methyltransferase (211 aa).

Residues E37, D62, E89, and D112 each contribute to the S-adenosyl-L-methionine site. D112 is an active-site residue. Positions 116 and 148 each coordinate substrate.

It belongs to the class I-like SAM-binding methyltransferase superfamily. TrmB family.

The enzyme catalyses guanosine(46) in tRNA + S-adenosyl-L-methionine = N(7)-methylguanosine(46) in tRNA + S-adenosyl-L-homocysteine. It participates in tRNA modification; N(7)-methylguanine-tRNA biosynthesis. Catalyzes the formation of N(7)-methylguanine at position 46 (m7G46) in tRNA. This is tRNA (guanine-N(7)-)-methyltransferase from Geobacter metallireducens (strain ATCC 53774 / DSM 7210 / GS-15).